Consider the following 353-residue polypeptide: tRNA-specific 2-thiouridylase MnmA (353 aa).

ATP contacts are provided by residues 6 to 13 (GMSGGVDS) and L32. Residue C99 is the Nucleophile of the active site. An intrachain disulfide couples C99 to C197. ATP is bound at residue G124. The tract at residues 147 to 149 (KDQ) is interaction with tRNA. The active-site Cysteine persulfide intermediate is C197. The interaction with tRNA stretch occupies residues 303–304 (RY).

This sequence belongs to the MnmA/TRMU family.

The protein localises to the cytoplasm. The enzyme catalyses S-sulfanyl-L-cysteinyl-[protein] + uridine(34) in tRNA + AH2 + ATP = 2-thiouridine(34) in tRNA + L-cysteinyl-[protein] + A + AMP + diphosphate + H(+). Functionally, catalyzes the 2-thiolation of uridine at the wobble position (U34) of tRNA, leading to the formation of s(2)U34. In Persephonella marina (strain DSM 14350 / EX-H1), this protein is tRNA-specific 2-thiouridylase MnmA.